We begin with the raw amino-acid sequence, 75 residues long: Translational regulator CsrA (75 aa).

Belongs to the CsrA/RsmA family. As to quaternary structure, homodimer; the beta-strands of each monomer intercalate to form a hydrophobic core, while the alpha-helices form wings that extend away from the core. Interacts with FliW.

It is found in the cytoplasm. In terms of biological role, a translational regulator that binds mRNA to regulate translation initiation and/or mRNA stability. Usually binds in the 5'-UTR at or near the Shine-Dalgarno sequence preventing ribosome-binding, thus repressing translation. Its function is probably anatagonized by FliW. Inhibits translation of flaA mRNA in vitro. Involved in post-transcriptional regulation of flagellin biosynthesis. The polypeptide is Translational regulator CsrA (Campylobacter jejuni subsp. jejuni serotype O:6 (strain 81116 / NCTC 11828)).